Consider the following 137-residue polypeptide: MKPAARRRARECAVQAIYSWQLSGNDIADVELEFLSEQDTQGVDIAYFRELLVGVAINAARLDKAMEPYLSRQLEELGQVEKAILRLAMFELSFREDVPYKVAINEAIELAKVFGADDSHKFVNGVLDKAAPTVRKK.

This sequence belongs to the NusB family.

Involved in transcription antitermination. Required for transcription of ribosomal RNA (rRNA) genes. Binds specifically to the boxA antiterminator sequence of the ribosomal RNA (rrn) operons. The chain is Transcription antitermination protein NusB from Proteus mirabilis (strain HI4320).